Consider the following 106-residue polypeptide: MLKVRKDDEVVVLAGKDKGKRGKVLKVLREDSRVLVEKVNMIKRHVRPDRMGKAGGIVEKEAPIHVSNVAIFNAATGGGDRIGYKVLEDGQKVRVFKSNGEVIGRR.

This sequence belongs to the universal ribosomal protein uL24 family. Part of the 50S ribosomal subunit.

One of two assembly initiator proteins, it binds directly to the 5'-end of the 23S rRNA, where it nucleates assembly of the 50S subunit. Its function is as follows. One of the proteins that surrounds the polypeptide exit tunnel on the outside of the subunit. The sequence is that of Large ribosomal subunit protein uL24 from Acidithiobacillus ferrooxidans (strain ATCC 53993 / BNL-5-31) (Leptospirillum ferrooxidans (ATCC 53993)).